We begin with the raw amino-acid sequence, 146 residues long: Hemoglobin subunit beta (146 aa).

An N-acetylvaline modification is found at V1. Residues 2–146 (HLTGEEKSAV…VANALAHKYH (145 aa)) enclose the Globin domain. T12 bears the Phosphothreonine mark. Residue S44 is modified to Phosphoserine. K59 is subject to N6-acetyllysine. Residue H63 coordinates heme b. K82 bears the N6-acetyllysine mark. H92 is a binding site for heme b. At C93 the chain carries S-nitrosocysteine. K144 is modified (N6-acetyllysine).

Belongs to the globin family. In terms of assembly, heterotetramer of two alpha chains and two beta chains. In terms of tissue distribution, red blood cells.

Involved in oxygen transport from the lung to the various peripheral tissues. In Mico argentatus (Silvery marmoset), this protein is Hemoglobin subunit beta (HBB).